We begin with the raw amino-acid sequence, 241 residues long: MATVSMRDMLQAGVHFGHQTRYWNPKMKPFIFGARNKVHIINLEQTVPLFNDALAELNKIASRKGKILFVGTKRAASEAVKEAANSCDQFFVNHRWLGGMLTNWKTVRQSIKRLKDLETQSQDGTFEKLTKKEALMRTRELDKLENSLGGIKDMGGLPDALFVIDAEHEHIAINEANNLGIPVFAIVDTNSDPDGVDFIIPGNDDAIRAINLYLTAVATTVRKGRSQDLAEQAEESFVEAE.

The protein belongs to the universal ribosomal protein uS2 family.

This chain is Small ribosomal subunit protein uS2, found in Sodalis glossinidius (strain morsitans).